The sequence spans 89 residues: Small ribosomal subunit protein uS17 (89 aa).

It belongs to the universal ribosomal protein uS17 family. In terms of assembly, part of the 30S ribosomal subunit.

One of the primary rRNA binding proteins, it binds specifically to the 5'-end of 16S ribosomal RNA. This Nocardia farcinica (strain IFM 10152) protein is Small ribosomal subunit protein uS17.